A 141-amino-acid chain; its full sequence is Elongation factor G, chloroplastic (141 aa).

Positions 12 to 141 (KDYRNIGIMA…VPRICFVNKM (130 aa)) constitute a tr-type G domain. GTP is bound by residues 21–28 (AHIDAGKT) and 85–89 (DTPGH).

The protein belongs to the TRAFAC class translation factor GTPase superfamily. Classic translation factor GTPase family. EF-G/EF-2 subfamily.

It is found in the plastid. It localises to the chloroplast. It functions in the pathway protein biosynthesis; polypeptide chain elongation. In terms of biological role, chloroplast-localized elongation factor EF-G involved in protein synthesis in plastids. Catalyzes the GTP-dependent ribosomal translocation step during translation elongation. During this step, the ribosome changes from the pre-translocational (PRE) to the post-translocational (POST) state as the newly formed A-site-bound peptidyl-tRNA and P-site-bound deacylated tRNA move to the P and E sites, respectively. Catalyzes the coordinated movement of the two tRNA molecules, the mRNA and conformational changes in the ribosome. The chain is Elongation factor G, chloroplastic (fusA) from Pisum sativum (Garden pea).